We begin with the raw amino-acid sequence, 110 residues long: MSGAHHLTPPTDYGKPVLAASIGISLALLVYTATRSTLPHVGDNLHALPHGGRYVDGTKSISYFSPSASKTRDPFPFAFLLILTLSGLILLLSRRRSNPHSCPSCGTPHA.

Residues 1-10 (MSGAHHLTPP) lie on the Cytoplasmic side of the membrane. Residues 11 to 34 (TDYGKPVLAASIGISLALLVYTAT) form a helical membrane-spanning segment. Residues 35–76 (RSTLPHVGDNLHALPHGGRYVDGTKSISYFSPSASKTRDPFP) lie on the Lumenal side of the membrane. A helical transmembrane segment spans residues 77-92 (FAFLLILTLSGLILLL). Residues 93–110 (SRRRSNPHSCPSCGTPHA) are Cytoplasmic-facing.

Belongs to the Tymovirales TGBp2 protein family.

Its subcellular location is the host endoplasmic reticulum membrane. In terms of biological role, plays a role in viral cell-to-cell propagation, by facilitating genome transport to neighboring plant cells through plasmosdesmata,. This is Movement protein TGB2 from Plantago asiatica (P1AMV).